We begin with the raw amino-acid sequence, 202 residues long: IMP cyclohydrolase (202 aa).

The segment at 29 to 52 is disordered; it reads VQRDGTVTVEPTPDAPETDNPYIS.

The protein belongs to the archaeal IMP cyclohydrolase family.

The enzyme catalyses IMP + H2O = 5-formamido-1-(5-phospho-D-ribosyl)imidazole-4-carboxamide. It functions in the pathway purine metabolism; IMP biosynthesis via de novo pathway; IMP from 5-formamido-1-(5-phospho-D-ribosyl)imidazole-4-carboxamide: step 1/1. Functionally, catalyzes the cyclization of 5-formylamidoimidazole-4-carboxamide ribonucleotide to IMP. This Haloarcula marismortui (strain ATCC 43049 / DSM 3752 / JCM 8966 / VKM B-1809) (Halobacterium marismortui) protein is IMP cyclohydrolase.